Consider the following 215-residue polypeptide: Probable phosphoglycerate mutase GpmB (215 aa).

Residues 8 to 15, 21 to 22, Arg-58, Arg-60, 82 to 85, 104 to 105, and 151 to 152 contribute to the substrate site; these read RHGETQWN, QG, ELDM, RR, and GI. The active-site Tele-phosphohistidine intermediate is the His-9. The active-site Proton donor/acceptor is the Glu-82.

This sequence belongs to the phosphoglycerate mutase family. GpmB subfamily.

It carries out the reaction (2R)-2-phosphoglycerate = (2R)-3-phosphoglycerate. The protein operates within carbohydrate degradation; glycolysis; pyruvate from D-glyceraldehyde 3-phosphate: step 3/5. The polypeptide is Probable phosphoglycerate mutase GpmB (Klebsiella pneumoniae subsp. pneumoniae (strain ATCC 700721 / MGH 78578)).